Here is a 78-residue protein sequence, read N- to C-terminus: WAP four-disulfide core domain protein 12 (78 aa).

Positions 1-21 (MWPNSILVLTVLLISSTLVTG) are cleaved as a signal peptide. The 48-residue stretch at 25–72 (KGAEKGVCPPDNVRCIRGEDPQCHNDNDCKDQKICCYWHCGFKCVQPV) folds into the WAP domain. Disulfide bonds link Cys-32/Cys-60, Cys-39/Cys-64, Cys-47/Cys-59, and Cys-53/Cys-68.

The protein localises to the secreted. In terms of biological role, antibacterial protein. Putative acid-stable proteinase inhibitor. This chain is WAP four-disulfide core domain protein 12, found in Rattus norvegicus (Rat).